Here is a 106-residue protein sequence, read N- to C-terminus: MSAAKIKKGDKVVVLAGKDKGKRGEVLKAIPKEGRVVVQGVNVVKRHTRPTNTAAGGIVEKEASIHVSNVAHEDPKDGSPTRVGFKVLEDGRKVRYAKRSGDVIDG.

It belongs to the universal ribosomal protein uL24 family. In terms of assembly, part of the 50S ribosomal subunit.

One of two assembly initiator proteins, it binds directly to the 5'-end of the 23S rRNA, where it nucleates assembly of the 50S subunit. In terms of biological role, one of the proteins that surrounds the polypeptide exit tunnel on the outside of the subunit. The polypeptide is Large ribosomal subunit protein uL24 (Rhodospirillum rubrum (strain ATCC 11170 / ATH 1.1.1 / DSM 467 / LMG 4362 / NCIMB 8255 / S1)).